The sequence spans 75 residues: Antimicrobial peptide ctriporin (75 aa).

Residues 1-22 (MDSKYLFVFLIFNVIVIDLCQG) form the signal peptide. Lys-41 is subject to Lysine amide. A propeptide spanning residues 47–75 (ELGSQYDYLQDFRKRELDLDDLLSKFPDY) is cleaved from the precursor.

Belongs to the non-disulfide-bridged peptide (NDBP) superfamily. Short antimicrobial peptide (group 4) family. In terms of tissue distribution, expressed by the venom gland.

The protein resides in the secreted. It is found in the target cell membrane. In terms of biological role, antimicrobial peptide that acts by breaking the cell wall. Is active against Gram-positive bacteria, fungi and antibiotic-resistant pathogens: S.aureus (MIC=5 ug/ml), M.luteus (MIC=5 ug/ml), B.thuringiensis (MIC=10 ug/ml), B.subtilis (MIC=10 ug/ml), C.albicans (MIC=20 ug/ml), methicillin-resistant S.aureus (MIC=5-10 ug/ml), and penicillin-resistant S.epidermidis (MIC=10 ug/ml). Also shows potent activity against antibiotic-sensitive and -resistant Acinetobacter baumannii (MIC=10-20 uM). Shows cytolytic activity against human erythrocytes. In vivo, is efficient in curing staphylococcal skin infection in mice, when externally applied. This Chaerilus tricostatus (Scorpion) protein is Antimicrobial peptide ctriporin.